The sequence spans 377 residues: Compound eye opsin BCRH2 (377 aa).

At 1-53 (MTNATGPQMAYYGAASMDFGYPEGVSIVDFVRPEIKPYVHQHWYNYPPVNPMW) the chain is on the extracellular side. A glycan (N-linked (GlcNAc...) asparagine) is linked at Asn-3. A helical transmembrane segment spans residues 54–78 (HYLLGVIYLFLGTVSIFGNGLVIYL). The Cytoplasmic portion of the chain corresponds to 79–90 (FNKSAALRTPAN). A helical membrane pass occupies residues 91–115 (ILVVNLALSDLIMLTTNVPFFTYNC). The Extracellular portion of the chain corresponds to 116-131 (FSGGVWMFSPQYCEIY). An intrachain disulfide couples Cys-128 to Cys-205. Residues 132–151 (ACLGAITGVCSIWLLCMISF) traverse the membrane as a helical segment. Residues 152–170 (DRYNIICNGFNGPKLTTGK) are Cytoplasmic-facing. A helical transmembrane segment spans residues 171–194 (AVVFALISWVIAIGCALPPFFGWG). At 195-218 (NYILEGILDSCSYDYLTQDFNTFS) the chain is on the extracellular side. Residues 219-246 (YNIFIFVFDYFLPAAIIVFSYVFIVKAI) traverse the membrane as a helical segment. The Cytoplasmic portion of the chain corresponds to 247–281 (FAHEAAMRAQAKKMNVSTLRSNEADAQRAEIRIAK). The helical transmembrane segment at 282 to 305 (TALVNVSLWFICWTPYALISLKGV) threads the bilayer. Residues 306-313 (MGDTSGIT) lie on the Extracellular side of the membrane. A helical transmembrane segment spans residues 314 to 338 (PLVSTLPALLAKSCSCYNPFVYAIS). Lys-325 carries the N6-(retinylidene)lysine modification. The Cytoplasmic segment spans residues 339-377 (HPKYRLAITQHLPWFCVHETETKSNDDSQSNSTVAQDKA).

It belongs to the G-protein coupled receptor 1 family. Opsin subfamily. Post-translationally, phosphorylated on some or all of the serine and threonine residues present in the C-terminal region. Expressed in all of the seven retinular cells (R1-R7) forming the main rhabdom in each ommatidium.

It is found in the membrane. Visual pigments are the light-absorbing molecules that mediate vision. They consist of an apoprotein, opsin, covalently linked to cis-retinal. This opsin produces visual pigments with maximal absorption in the blue-green region of the spectrum. In Hemigrapsus sanguineus (Asian shore crab), this protein is Compound eye opsin BCRH2.